Here is a 628-residue protein sequence, read N- to C-terminus: RING finger protein 112 (628 aa).

Residues 57-98 (CSICLERPREPISLDCGHDFCPRCFSTHRVPGCGPPCCPECR) form an RING-type zinc finger. The interaction with ZBTB16 stretch occupies residues 132–628 (AVRAEPLLLV…GDREPLLQEE (497 aa)). The 243-residue stretch at 167 to 409 (DTPVCLLAVL…RCPGYWSEGR (243 aa)) folds into the GB1/RHD3-type G domain. A GTP-binding site is contributed by 318–319 (RD). 2 consecutive transmembrane segments (helical) span residues 544-564 (LAAV…GVVG) and 577-597 (GMVA…GGGV).

Belongs to the TRAFAC class dynamin-like GTPase superfamily. GB1/RHD3 GTPase family. GB1 subfamily. As to quaternary structure, self-associates. Interacts with SP1 in an oxidative stress-regulated manner. Interacts with SIGMAR1 in an oxidative stress-regulated manner. Interacts with ZBTB16 (via C2H2-type zinc finger domains 1 and 2). Post-translationally, auto-ubiquitinated.

It is found in the membrane. It localises to the cytoplasm. The protein localises to the nucleus. The protein resides in the nuclear body. Its subcellular location is the nucleoplasm. It is found in the endosome. It localises to the cytoplasmic vesicle. The protein localises to the secretory vesicle. The protein resides in the synaptic vesicle. Its subcellular location is the postsynaptic density. It is found in the perikaryon. It localises to the cell projection. The protein localises to the neuron projection. The catalysed reaction is S-ubiquitinyl-[E2 ubiquitin-conjugating enzyme]-L-cysteine + [acceptor protein]-L-lysine = [E2 ubiquitin-conjugating enzyme]-L-cysteine + N(6)-ubiquitinyl-[acceptor protein]-L-lysine.. Its pathway is protein modification; protein ubiquitination. Functionally, E3 ubiquitin-protein ligase that plays an important role in neuronal differentiation, including neurogenesis and gliogenesis, during brain development. During embryonic development initiates neuronal differentiation by inducing cell cycle arrest at the G0/G1 phase through up-regulation of cell-cycle regulatory proteins. Plays a role not only in the fetal period during the development of the nervous system, but also in the adult brain, where it is involved in the maintenance of neural functions and protection of the nervous tissue cells from oxidative stress-induced damage. Exhibits GTPase and E3 ubiquitin-protein ligase activities. Regulates dendritic spine density and synaptic neurotransmission; its ability to hydrolyze GTP is involved in the maintenance of dendritic spine density. The polypeptide is RING finger protein 112 (RNF112) (Bos taurus (Bovine)).